The chain runs to 27 residues: Voltage-dependent anion-selective channel protein (27 aa).

The protein belongs to the eukaryotic mitochondrial porin family. Interacts with hexokinases. As to expression, photoreceptors.

It is found in the mitochondrion outer membrane. Functionally, forms a channel through the cell membrane that allows diffusion of small hydrophilic molecules. This Doryteuthis pealeii (Longfin inshore squid) protein is Voltage-dependent anion-selective channel protein.